A 154-amino-acid chain; its full sequence is Myoglobin (154 aa).

Residues Gly2 to Lys148 form the Globin domain. Phosphoserine is present on Ser4. His65 is a binding site for nitrite. Position 65 (His65) interacts with O2. Thr68 bears the Phosphothreonine mark. His94 is a binding site for heme b.

Belongs to the globin family. As to quaternary structure, monomeric.

It is found in the cytoplasm. The protein localises to the sarcoplasm. It carries out the reaction Fe(III)-heme b-[protein] + nitric oxide + H2O = Fe(II)-heme b-[protein] + nitrite + 2 H(+). It catalyses the reaction H2O2 + AH2 = A + 2 H2O. Its function is as follows. Monomeric heme protein which primary function is to store oxygen and facilitate its diffusion within muscle tissues. Reversibly binds oxygen through a pentacoordinated heme iron and enables its timely and efficient release as needed during periods of heightened demand. Depending on the oxidative conditions of tissues and cells, and in addition to its ability to bind oxygen, it also has a nitrite reductase activity whereby it regulates the production of bioactive nitric oxide. Under stress conditions, like hypoxia and anoxia, it also protects cells against reactive oxygen species thanks to its pseudoperoxidase activity. The protein is Myoglobin (MB) of Orycteropus afer (Aardvark).